Consider the following 178-residue polypeptide: MSIEVSNESGIDVSETELVSVARFVIGKMDVNPGAELSMVLLDTAAMADLHMRWMDLPGPTDVMSFPMDELEPGGRPDAPEPGPAMLGDIVLCPEFAAEQAAAAGHSLGHELALLTIHGVLHLLGYDHGEPDEEKEMFALQDRLLEEWVAEQVQAYQQDRQDERDRRLLDKSRYFDEP.

Zn(2+) contacts are provided by H118, H122, and H128. Positions 156 to 178 are disordered; the sequence is YQQDRQDERDRRLLDKSRYFDEP. Basic and acidic residues predominate over residues 159–178; it reads DRQDERDRRLLDKSRYFDEP.

Belongs to the endoribonuclease YbeY family. Requires Zn(2+) as cofactor.

It is found in the cytoplasm. Functionally, single strand-specific metallo-endoribonuclease involved in late-stage 70S ribosome quality control and in maturation of the 3' terminus of the 16S rRNA. The protein is Endoribonuclease YbeY of Mycobacterium marinum (strain ATCC BAA-535 / M).